We begin with the raw amino-acid sequence, 127 residues long: Ribosome-binding factor A (127 aa).

It belongs to the RbfA family. As to quaternary structure, monomer. Binds 30S ribosomal subunits, but not 50S ribosomal subunits or 70S ribosomes.

The protein localises to the cytoplasm. One of several proteins that assist in the late maturation steps of the functional core of the 30S ribosomal subunit. Associates with free 30S ribosomal subunits (but not with 30S subunits that are part of 70S ribosomes or polysomes). Required for efficient processing of 16S rRNA. May interact with the 5'-terminal helix region of 16S rRNA. The protein is Ribosome-binding factor A of Chloroflexus aggregans (strain MD-66 / DSM 9485).